The primary structure comprises 607 residues: Sulfite reductase [NADPH] flavoprotein alpha-component (607 aa).

The Flavodoxin-like domain maps to 66 to 204 (VTILYGSQTG…AAGQWHADVL (139 aa)). Residues 72-77 (SQTGNG), 119-122 (STHG), and 155-164 (LGDSSYEFFC) each bind FMN. In terms of domain architecture, FAD-binding FR-type spans 239-456 (QNPYRAEVLV…VEPNKHFRLP (218 aa)). FAD contacts are provided by residues T327, L361, 395–398 (RLYS), 413–415 (TVA), and 428–431 (GGAS). NADP(+) is bound by residues 527–528 (SR), 533–537 (KIYVQ), and D569. Y607 contributes to the FAD binding site.

It belongs to the NADPH-dependent sulphite reductase flavoprotein subunit CysJ family. The protein in the N-terminal section; belongs to the flavodoxin family. In the C-terminal section; belongs to the flavoprotein pyridine nucleotide cytochrome reductase family. As to quaternary structure, alpha(8)-beta(8). The alpha component is a flavoprotein, the beta component is a hemoprotein. FAD serves as cofactor. FMN is required as a cofactor.

It catalyses the reaction hydrogen sulfide + 3 NADP(+) + 3 H2O = sulfite + 3 NADPH + 4 H(+). It participates in sulfur metabolism; hydrogen sulfide biosynthesis; hydrogen sulfide from sulfite (NADPH route): step 1/1. Component of the sulfite reductase complex that catalyzes the 6-electron reduction of sulfite to sulfide. This is one of several activities required for the biosynthesis of L-cysteine from sulfate. The flavoprotein component catalyzes the electron flow from NADPH -&gt; FAD -&gt; FMN to the hemoprotein component. This Shewanella oneidensis (strain ATCC 700550 / JCM 31522 / CIP 106686 / LMG 19005 / NCIMB 14063 / MR-1) protein is Sulfite reductase [NADPH] flavoprotein alpha-component.